Reading from the N-terminus, the 98-residue chain is MSLVHINILMAFTMSLTGLLMYRSHLMSALLCLEGMVLSLFILATLTILNSHFTLANMMPIILLVFAACEAAIGLALLIMISNTYGTDYVQNLNLLQC.

A run of 3 helical transmembrane segments spans residues 1 to 21 (MSLV…GLLM), 29 to 49 (ALLC…LTIL), and 61 to 81 (IILL…LIMI).

Belongs to the complex I subunit 4L family. In terms of assembly, core subunit of respiratory chain NADH dehydrogenase (Complex I) which is composed of 45 different subunits.

The protein resides in the mitochondrion inner membrane. It catalyses the reaction a ubiquinone + NADH + 5 H(+)(in) = a ubiquinol + NAD(+) + 4 H(+)(out). Core subunit of the mitochondrial membrane respiratory chain NADH dehydrogenase (Complex I) which catalyzes electron transfer from NADH through the respiratory chain, using ubiquinone as an electron acceptor. Part of the enzyme membrane arm which is embedded in the lipid bilayer and involved in proton translocation. The polypeptide is NADH-ubiquinone oxidoreductase chain 4L (MT-ND4L) (Monodon monoceros (Narwhal)).